Consider the following 347-residue polypeptide: Transcription factor JunD (347 aa).

A disordered region spans residues 1–43 (METPFYGDEALSGLGGGASGSGGSFASPGRLFPGAPPTAAAGS). Over residues 13 to 23 (GLGGGASGSGG) the composition is skewed to gly residues. The Menin-binding motif (MBM) motif lies at 27 to 39 (SPGRLFPGAPPTA). Positions 46–55 (KKDALTLSLS) match the MAP kinase docking motif; essential for its phosphorylation motif. The disordered stretch occupies residues 62–86 (LKPAAAPPPTPLRADGAPSAAPPDG). Residues 73–86 (LRADGAPSAAPPDG) are compositionally biased toward low complexity. The residue at position 90 (Ser90) is a Phosphoserine. The residue at position 100 (Ser100) is a Phosphoserine; by MAPK8. Thr117 carries the phosphothreonine modification. The interval 244–264 (QTVPDVPSFGESPPLSPIDMD) is disordered. 3 positions are modified to phosphoserine: Ser251, Ser255, and Ser259. Residues 268-295 (RIKAERKRLRNRIAASKCRKRKLERISR) are basic motif. In terms of domain architecture, bZIP spans 268–331 (RIKAERKRLR…AQLKQKVLSH (64 aa)). The segment at 296–324 (LEEKVKTLKSQNTELASTASLLREQVAQL) is leucine-zipper.

This sequence belongs to the bZIP family. Jun subfamily. In terms of assembly, heterodimer; binds DNA as a heterodimer. Component of an AP-1 transcription factor complex composed of JUN-FOS heterodimers. As part of the AP-1 transcription factor complex, forms heterodimers with FOS proteins, thereby binding to the AP-1 consensus sequence and stimulating transcription. Forms heterodimers with FOSB; thereby binding to the AP-1 consensus sequence. Interacts (via MBM motif) with MEN1; this interaction represses transcriptional activation. Interacts with MAPK10; this interaction is inhibited in the presence of MEN1. In terms of processing, phosphorylated by MAP kinases MAPK8 and MAPK10; phosphorylation is inhibited in the presence of MEN1.

It localises to the nucleus. Its function is as follows. Transcription factor binding AP-1 sites. Heterodimerizes with proteins of the FOS family to form an AP-1 transcription factor complex, thereby enhancing their DNA binding activity to an AP-1 consensus sequence 3'-TGA[GC]TCA-5' and enhancing their transcriptional activity. This is Transcription factor JunD (JUND) from Homo sapiens (Human).